Reading from the N-terminus, the 635-residue chain is Threonine--tRNA ligase (635 aa).

The TGS domain occupies 1 to 61 (MVSIRLPDGS…DHDVALAIVT (61 aa)). Residues 242–533 (DHRKLGKQLD…LIEHHAGAMP (292 aa)) are catalytic. Zn(2+) contacts are provided by Cys-333, His-384, and His-510.

This sequence belongs to the class-II aminoacyl-tRNA synthetase family. Homodimer. Requires Zn(2+) as cofactor.

Its subcellular location is the cytoplasm. It carries out the reaction tRNA(Thr) + L-threonine + ATP = L-threonyl-tRNA(Thr) + AMP + diphosphate + H(+). Catalyzes the attachment of threonine to tRNA(Thr) in a two-step reaction: L-threonine is first activated by ATP to form Thr-AMP and then transferred to the acceptor end of tRNA(Thr). Also edits incorrectly charged L-seryl-tRNA(Thr). The sequence is that of Threonine--tRNA ligase from Paraburkholderia xenovorans (strain LB400).